A 408-amino-acid chain; its full sequence is S100P-binding protein (408 aa).

Disordered stretches follow at residues 1-111, 162-234, and 271-291; these read MMCS…AETP, KDET…SENP, and VSTS…MKGH. Positions 28–59 are enriched in acidic residues; the sequence is SLDEDGLDDSLLELSEGEEDDGDVNYTEEEID. Composition is skewed to basic and acidic residues over residues 77 to 86 and 162 to 185; these read DGGHVEKGER and KDET…REDG. Serine 187 bears the Phosphoserine mark. Positions 188-234 are enriched in polar residues; that stretch reads PNESKLCTESEGISPNNSAWNGPQLSSSNNNFQQTVSDKNMPDSENP. Residues 280–291 show a composition bias toward basic and acidic residues; the sequence is VLNKDSGKMKGH.

Interacts with S100P. In terms of tissue distribution, expressed in brain, spleen, and lung. Not detected in pancreas or liver. In pancreas, expressed predominantly in islet cells and to a lesser extent in acinar cells, but not expressed in ductal cells. Up-regulated in various pancreatic ductal adenocarcinomas and pancreatic intraepithelial neoplasias. Detected in pancreatic ductal adenocarcinoma cells (at protein level). Not detected in non-neoplastic ductal epithelium (at protein level).

Its subcellular location is the nucleus. The sequence is that of S100P-binding protein from Homo sapiens (Human).